A 356-amino-acid chain; its full sequence is Uroporphyrinogen decarboxylase (356 aa).

Residues 27-31 (RQAGR), Asp-77, Tyr-154, Ser-209, and His-327 contribute to the substrate site.

Belongs to the uroporphyrinogen decarboxylase family. In terms of assembly, homodimer.

The protein localises to the cytoplasm. It carries out the reaction uroporphyrinogen III + 4 H(+) = coproporphyrinogen III + 4 CO2. The protein operates within porphyrin-containing compound metabolism; protoporphyrin-IX biosynthesis; coproporphyrinogen-III from 5-aminolevulinate: step 4/4. Its function is as follows. Catalyzes the decarboxylation of four acetate groups of uroporphyrinogen-III to yield coproporphyrinogen-III. The chain is Uroporphyrinogen decarboxylase from Aromatoleum aromaticum (strain DSM 19018 / LMG 30748 / EbN1) (Azoarcus sp. (strain EbN1)).